We begin with the raw amino-acid sequence, 980 residues long: Vacuolar protein sorting-associated protein 11 homolog (980 aa).

The stretch at 407–554 is one CHCR repeat; the sequence is YKETIGMLEP…GRDLLIHARD (148 aa). Residues 803 to 843 form an RING-type; atypical zinc finger; the sequence is CSACDTPLQLPTVHFLCKHAYHVHCFESYNMDGSDKCPACQ. Residues 886 to 898 show a composition bias toward basic and acidic residues; that stretch reads TKKTKKSEAKKDP. Positions 886–980 are disordered; sequence TKKTKKSEAK…APAPSTNPFD (95 aa). Composition is skewed to polar residues over residues 917-937 and 947-960; these read TTISRTMSTVSSNMATPSRQR and TNPFFNSDSGTRLS.

It belongs to the VPS11 family. As to quaternary structure, probable core component of at least two putative endosomal tethering complexes, the homotypic fusion and vacuole protein sorting (HOPS) complex and the class C core vacuole/endosome tethering (CORVET) complex. Their common core is composed of the class C Vps proteins vps-11, vps-16 and vps-18, which in HOPS further associates with vps-33.1, vps-39 and vps-41 and in CORVET with vps-8 and vps-33.2.

It is found in the late endosome membrane. The protein localises to the lysosome membrane. Its function is as follows. Plays a role in vesicle-mediated protein trafficking to lysosomal compartments including the endocytic membrane transport pathways. Believed to act as a core component of the putative HOPS and CORVET endosomal tethering complexes which are proposed to be involved in the rab-5-to-rab-7 endosome conversion probably implicating sand-1, and via binding SNAREs and SNARE complexes to mediate tethering and docking events during SNARE-mediated membrane fusion. The HOPS complex is proposed to be recruited to Rab7 on the late endosomal membrane and to regulate late endocytic, phagocytic and autophagic traffic towards lysosomes. Within the HOPS complex, contributes to the normal development of gut granules in embryonic and adult intestinal cells. The CORVET complex is proposed to function as a Rab5 effector to mediate early endosome fusion probably in specific endosome subpopulations. Required for fusion of endosomes and autophagosomes with lysosomes. Involved in cargo transport from early to late endosomes and required for the transition from early to late endosomes. Possibly has a role in clearance of apoptotic cells during programmed cell death. The chain is Vacuolar protein sorting-associated protein 11 homolog from Caenorhabditis elegans.